The following is a 340-amino-acid chain: MNNQFEGRSFLKEIDYTPTELAYLIDFASHLKTLKAHHIPHPYLQGKNIALLFEKTSTRTRSAFTVAANDLGANPEFLCKDDIQFGTKESVVDTAKVLGSMYDGIEFRGFKQSTVEDLATYSGVPVWNGLTDEWHPTQILADFLTLKEHFGHLKGLTLAYVGDGRNNMANSLLVAGAMLGINIAIGSPVALQPAPAVVALAQQYAQAAGSTVVITADPQQAVTQADALYTDVWVSMGEQVDYGERIKQLLPFQINTALLAATGKSSTIVMHCLPALHDLKTQLGAKLGEQYGMTAFEITDDVFQSKQEVVFEEAGNRMPAIKAVMAATLGNLFIPTSIFN.

Carbamoyl phosphate-binding positions include 57–60, glutamine 84, arginine 108, and 135–138; these read STRT and HPTQ. Residues asparagine 167, aspartate 231, and 235 to 236 each bind L-ornithine; that span reads SM. Residues 272 to 273 and arginine 317 each bind carbamoyl phosphate; that span reads CL.

This sequence belongs to the aspartate/ornithine carbamoyltransferase superfamily. OTCase family.

The protein resides in the cytoplasm. The catalysed reaction is carbamoyl phosphate + L-ornithine = L-citrulline + phosphate + H(+). It functions in the pathway amino-acid biosynthesis; L-arginine biosynthesis; L-arginine from L-ornithine and carbamoyl phosphate: step 1/3. In terms of biological role, reversibly catalyzes the transfer of the carbamoyl group from carbamoyl phosphate (CP) to the N(epsilon) atom of ornithine (ORN) to produce L-citrulline. In Lactiplantibacillus plantarum (strain ATCC BAA-793 / NCIMB 8826 / WCFS1) (Lactobacillus plantarum), this protein is Ornithine carbamoyltransferase (argF).